Consider the following 289-residue polypeptide: ATP synthase mitochondrial F1 complex assembly factor 2 (289 aa).

The N-terminal 40 residues, 1–40, are a transit peptide targeting the mitochondrion; sequence MWRSCLRLRDGGRRLLNRPAGGPSASMSPGPTIPSPARAY. Residues 13-40 form a disordered region; it reads RRLLNRPAGGPSASMSPGPTIPSPARAY. Position 133 is an N6-succinyllysine (lysine 133).

It belongs to the ATP12 family. As to quaternary structure, interacts with ATP5F1B; involved in the assembly of the F1 component of the mitochondrial ATP synthase (ATPase). Interacts with FMC1. Widely expressed.

Its subcellular location is the mitochondrion inner membrane. Its function is as follows. Plays a role in the assembly of the F1 component of the mitochondrial ATP synthase (ATPase). This chain is ATP synthase mitochondrial F1 complex assembly factor 2, found in Homo sapiens (Human).